Consider the following 53-residue polypeptide: Ovomucoid (53 aa).

The Kazal-like domain maps to 3 to 53 (VDCSEYPQPTCTTEHRPVCGSNNETYGNKCNFCNAVVKSNGTLTVSHFGKC). Cystine bridges form between Cys-5/Cys-35, Cys-13/Cys-32, and Cys-21/Cys-53. Asn-42 is a glycosylation site (N-linked (GlcNAc...) asparagine).

The protein localises to the secreted. The protein is Ovomucoid of Polyplectron bicalcaratum (Grey peacock-pheasant).